Here is a 226-residue protein sequence, read N- to C-terminus: Probable functional amyloid protease FapD (226 aa).

The signal sequence occupies residues 1 to 18 (MRRATLCLLLLLAGPSWA). The region spanning 50 to 180 (QKTDFSCGAA…AGWNGIVFAV (131 aa)) is the Peptidase C39 domain. Residue Cys-56 is part of the active site.

Belongs to the FapD family.

The protein localises to the periplasm. Probable cysteine protease that is involved in processing fibril precursors. Upon overexpression of the endogenous six-gene locus (fapA-fapF) in situ, cells form large clumps during liquid growth, make large amounts of biofilm and produce amyloid fibrils. Expression of the 6 gene operon in E.coli strain BL21(DE3) induces flocculation and biofilm formation with copious extracellular fibrils. The sequence is that of Probable functional amyloid protease FapD from Pseudomonas fluorescens.